Reading from the N-terminus, the 586-residue chain is Protein CBFA2T2 (586 aa).

Residues 1 to 95 form a disordered region; sequence MVGIPGPYQF…SSSSSLANQQ (95 aa). The segment covering 56 to 68 has biased composition (polar residues); the sequence is SSHSNGINHSPPT. Positions 77–90 are enriched in low complexity; the sequence is QRSSNGPSSSSSSS. Positions 102–197 constitute a TAFH domain; sequence VRQLSKLKRF…TPSQYLAQHE (96 aa). 2 disordered regions span residues 204–242 and 387–417; these read STSSPADSSELLMEMNGNGKRHSPDRREEERETAPAEPP and IRKGSEHPSRQHSPSSTDSGASDSVRDFGSR. Positions 228–237 are enriched in basic and acidic residues; it reads DRREEERETA. Residues 399-409 show a composition bias toward low complexity; sequence SPSSTDSGASD. The stretch at 429–481 forms a coiled coil; the sequence is RKAEEAVNEVKRQAMSEVQKAVSEAEQKAFEMIASERARMEQTIVDAKRRAAE. Residues Cys497, Cys500, Cys508, Cys511, Cys517, Cys521, His529, and Cys533 each contribute to the Zn(2+) site. An MYND-type zinc finger spans residues 497–533; it reads CWNCGRKASETCSGCNIARYCGSFCQHKDWEKHHRIC. The disordered stretch occupies residues 561 to 586; it reads SPTLERSSSATSRSSTPASVTAVDGL. Positions 566–586 are enriched in low complexity; it reads RSSSATSRSSTPASVTAVDGL.

It is found in the nucleus. In terms of biological role, may act as a transcriptional corepressor. The chain is Protein CBFA2T2 (cbfa2t2) from Xenopus laevis (African clawed frog).